A 1408-amino-acid chain; its full sequence is DNA-directed RNA polymerase subunit beta' (1408 aa).

4 residues coordinate Zn(2+): cysteine 70, cysteine 72, cysteine 85, and cysteine 88. The Mg(2+) site is built by aspartate 460, aspartate 462, and aspartate 464. The Zn(2+) site is built by cysteine 814, cysteine 888, cysteine 895, and cysteine 898.

Belongs to the RNA polymerase beta' chain family. The RNAP catalytic core consists of 2 alpha, 1 beta, 1 beta' and 1 omega subunit. When a sigma factor is associated with the core the holoenzyme is formed, which can initiate transcription. Mg(2+) serves as cofactor. Zn(2+) is required as a cofactor.

The enzyme catalyses RNA(n) + a ribonucleoside 5'-triphosphate = RNA(n+1) + diphosphate. In terms of biological role, DNA-dependent RNA polymerase catalyzes the transcription of DNA into RNA using the four ribonucleoside triphosphates as substrates. This is DNA-directed RNA polymerase subunit beta' from Baumannia cicadellinicola subsp. Homalodisca coagulata.